A 547-amino-acid polypeptide reads, in one-letter code: MSLVESPPWQALKSKYQELSSLHMRDFFAQDKKRGTRLSLEAAGLYFDYSKNRVDEKTIDLLCESANACNLPLRIEQLFSGKLTNESGEMVGFHTALRQVNNFSFKTNNNAIQEIHASWEKIKKLSIRIREGDYKGFTNKSITDIVNIGIGGSSLGPQMAYNALKPYVKAPLRCHFISNLDDTDFYETVRTLNPETTLFIITSKTFTTKETLENARRATEWLMQAAKKENLIQTHFMAVTAAPEKAHEFGIQKDNIFMLWPWVGGRFSVWSAAGLSLAIAIGWEEFFEFLRGAHAMDTHFRQAEFNKNMPILLALLSIWYINFFHAKTQAIIPYSQRLVYLPDYLTQLHMESLGKSVQLDGSAVHWQTGAVVWGDLGTNSQHSFHQLFLQGTMVIPVDFIAVLKNSRESHWQLPLIANCLGQSQTLMEGYDKEGVMRDLINQGIEHEKAEKLATYRLIRGNNPSNTIILEELNPYSLGSLLALYEHKVYVQSVIWNINPFNQWGVERGKHLAKDILQALQAETDQSSFDSSTERLINYVLKIKGNRP.

Residue glutamate 351 is the Proton donor of the active site. Active-site residues include histidine 382 and lysine 509.

The protein belongs to the GPI family.

It localises to the cytoplasm. The catalysed reaction is alpha-D-glucose 6-phosphate = beta-D-fructose 6-phosphate. Its pathway is carbohydrate biosynthesis; gluconeogenesis. It functions in the pathway carbohydrate degradation; glycolysis; D-glyceraldehyde 3-phosphate and glycerone phosphate from D-glucose: step 2/4. In terms of biological role, catalyzes the reversible isomerization of glucose-6-phosphate to fructose-6-phosphate. The chain is Glucose-6-phosphate isomerase from Coxiella burnetii (strain Dugway 5J108-111).